Consider the following 371-residue polypeptide: Protein STRICTOSIDINE SYNTHASE-LIKE 7 (371 aa).

The first 25 residues, 1-25, serve as a signal peptide directing secretion; the sequence is MPVLFSSRSLILSIIVPLLISIALY. 3 N-linked (GlcNAc...) asparagine glycosylation sites follow: N101, N137, and N285. A Phosphotyrosine modification is found at Y303.

It belongs to the strictosidine synthase family.

The protein localises to the vacuole. In Arabidopsis thaliana (Mouse-ear cress), this protein is Protein STRICTOSIDINE SYNTHASE-LIKE 7.